Reading from the N-terminus, the 163-residue chain is uncharacterized protein (163 aa).

Positions 144–163 are disordered; sequence WSHSQSQLGTPGRGKGALGF. The span at 154-163 shows a compositional bias: gly residues; the sequence is PGRGKGALGF.

This is an uncharacterized protein from Homo sapiens (Human).